The sequence spans 424 residues: Dual-specificity RNA methyltransferase RlmN (424 aa).

E132 functions as the Proton acceptor in the catalytic mechanism. The Radical SAM core domain maps to 138–388 (GPDRGTLCVS…VRTPRGRDIL (251 aa)). An intrachain disulfide couples C145 to C391. 3 residues coordinate [4Fe-4S] cluster: C152, C156, and C159. S-adenosyl-L-methionine is bound by residues 217–218 (GE), S249, 271–273 (SLH), and N348. Residue C391 is the S-methylcysteine intermediate of the active site.

The protein belongs to the radical SAM superfamily. RlmN family. Requires [4Fe-4S] cluster as cofactor.

The protein resides in the cytoplasm. The catalysed reaction is adenosine(2503) in 23S rRNA + 2 reduced [2Fe-2S]-[ferredoxin] + 2 S-adenosyl-L-methionine = 2-methyladenosine(2503) in 23S rRNA + 5'-deoxyadenosine + L-methionine + 2 oxidized [2Fe-2S]-[ferredoxin] + S-adenosyl-L-homocysteine. It catalyses the reaction adenosine(37) in tRNA + 2 reduced [2Fe-2S]-[ferredoxin] + 2 S-adenosyl-L-methionine = 2-methyladenosine(37) in tRNA + 5'-deoxyadenosine + L-methionine + 2 oxidized [2Fe-2S]-[ferredoxin] + S-adenosyl-L-homocysteine. Functionally, specifically methylates position 2 of adenine 2503 in 23S rRNA and position 2 of adenine 37 in tRNAs. m2A2503 modification seems to play a crucial role in the proofreading step occurring at the peptidyl transferase center and thus would serve to optimize ribosomal fidelity. The polypeptide is Dual-specificity RNA methyltransferase RlmN (Methylobacterium radiotolerans (strain ATCC 27329 / DSM 1819 / JCM 2831 / NBRC 15690 / NCIMB 10815 / 0-1)).